Here is a 486-residue protein sequence, read N- to C-terminus: Histone acetyltransferase type B catalytic subunit DDB_G0274269 (486 aa).

A coiled-coil region spans residues Asp-27–Asp-69. Positions Asn-33 to Asp-50 are enriched in basic and acidic residues. The segment at Asn-33–Thr-78 is disordered. The 198-residue stretch at Val-189–Tyr-386 folds into the N-acetyltransferase domain. Residues Tyr-260–Ile-262 and Gln-267–Lys-273 contribute to the acetyl-CoA site. Glu-299 serves as the catalytic Proton donor/acceptor. A coiled-coil region spans residues Asp-392 to Leu-481.

It belongs to the HAT1 family.

The enzyme catalyses L-lysyl-[protein] + acetyl-CoA = N(6)-acetyl-L-lysyl-[protein] + CoA + H(+). This chain is Histone acetyltransferase type B catalytic subunit DDB_G0274269, found in Dictyostelium discoideum (Social amoeba).